The primary structure comprises 283 residues: N-terminal Xaa-Pro-Lys N-methyltransferase 2 (283 aa).

S-adenosyl-L-methionine-binding positions include Gly124, Arg129, Asp146, 174-175 (LQ), and Gln190.

The protein belongs to the methyltransferase superfamily. NTM1 family.

It localises to the nucleus. It catalyses the reaction N-terminal L-alanyl-L-prolyl-L-lysyl-[protein] + S-adenosyl-L-methionine = N-terminal N-methyl-L-alanyl-L-prolyl-L-lysyl-[protein] + S-adenosyl-L-homocysteine + H(+). It carries out the reaction N-terminal L-prolyl-L-prolyl-L-lysyl-[protein] + S-adenosyl-L-methionine = N-terminal N-methyl-L-prolyl-L-prolyl-L-lysyl-[protein] + S-adenosyl-L-homocysteine + H(+). The enzyme catalyses N-terminal L-seryl-L-prolyl-L-lysyl-[protein] + S-adenosyl-L-methionine = N-terminal N-methyl-L-seryl-L-prolyl-L-lysyl-[protein] + S-adenosyl-L-homocysteine + H(+). In terms of biological role, alpha N-methyltransferase that methylates the N-terminus of target proteins containing the N-terminal motif [Ala/Pro/Ser]-Pro-Lys when the initiator Met is cleaved. Specifically catalyzes monomethylation of exposed alpha-amino group of Ala or Ser residue in the [Ala/Ser]-Pro-Lys motif and Pro in the Pro-Pro-Lys motif. Predominantly functions as a mono-methyltransferase but is also able to di-/tri-methylate the GPKRIA peptide and di-methylate the PPKRIA peptide (in vitro). May activate NTMT1 by priming its substrates for trimethylation. This Rattus norvegicus (Rat) protein is N-terminal Xaa-Pro-Lys N-methyltransferase 2 (Ntmt2).